Consider the following 889-residue polypeptide: Rho GTPase-activating protein 27 (889 aa).

Positions 6-69 (VGDVYVLVEH…PAQYVRELPA (64 aa)) constitute an SH3 domain. The disordered stretch occupies residues 104–132 (AGPDGAPEESGGRASSLCGPAQRGAATQR). Ser156, Ser216, and Ser249 each carry phosphoserine. WW domains follow at residues 246–280 (PLPS…SPFE) and 299–333 (VSLE…DEAE). A compositionally biased stretch (acidic residues) spans 329–341 (EDEAENEPEEELE). The tract at residues 329-397 (EDEAENEPEE…SPLTTPPGWS (69 aa)) is disordered. Position 347 is a phosphoserine (Ser347). The segment covering 383–395 (EPGPTSPLTTPPG) has biased composition (low complexity). One can recognise a WW 3 domain in the interval 411–444 (HFTQEQWVRLEDPHGKPYFYNPEDSSVRWELPQV). The interval 447 to 474 (PAPRSIHKSSQDGDTPAQASPPEEKVPA) is disordered. Position 456 is a phosphoserine (Ser456). Position 461 is a phosphothreonine (Thr461). Ser466 bears the Phosphoserine mark. The 117-residue stretch at 496-612 (TLDKAGVLHR…WHKAIAQGIQ (117 aa)) folds into the PH domain. The disordered stretch occupies residues 617 to 655 (ELPPEESESSRVDFGSSERLGSWQEKEEDARPNAAAPAL). The 190-residue stretch at 697 to 886 (CALAALCERE…LILQQCADIF (190 aa)) folds into the Rho-GAP domain.

In terms of assembly, interacts with SH3KBP1/CIN85. As to expression, expressed in germinal center B-cell, spleen, chronic lymphocytic leukemia, pancreatic cancer and lung cancer.

The protein resides in the cytoplasm. It is found in the membrane. In terms of biological role, rho GTPase-activating protein which may be involved in clathrin-mediated endocytosis. GTPase activators for the Rho-type GTPases act by converting them to an inactive GDP-bound state. Has activity toward CDC42 and RAC1. This Homo sapiens (Human) protein is Rho GTPase-activating protein 27.